The chain runs to 218 residues: Copper acquisition factor BIM1 (218 aa).

The first 19 residues, 1 to 19, serve as a signal peptide directing secretion; sequence MFALKFILITSFIASTALA. The Cu(2+) site is built by histidine 20 and histidine 65. Cystine bridges form between cysteine 40–cysteine 144 and cysteine 110–cysteine 161. 3 N-linked (GlcNAc...) asparagine glycosylation sites follow: asparagine 87, asparagine 91, and asparagine 124. Residue aspartate 138 participates in Cu(2+) binding. Residues asparagine 158 and asparagine 170 are each glycosylated (N-linked (GlcNAc...) asparagine). The segment at 160–194 is disordered; that stretch reads TCTDDASRTSNASSTSSGSATATSAAATSSSSGTS. Residues 167-194 show a composition bias toward low complexity; the sequence is RTSNASSTSSGSATATSAAATSSSSGTS. A lipid anchor (GPI-anchor amidated serine) is attached at serine 190. Residues 191–218 constitute a propeptide, removed in mature form; sequence SGTSGAIKEVVGLGALSLALGIAGLIIL.

This sequence belongs to the X325 family. It depends on Cu(2+) as a cofactor.

The protein resides in the cell membrane. Functionally, lytic polysaccharide monooxygenase-like protein that has diverged to biological functions other than polysaccharide degradation since it does not perform oxidative cleavage of polysaccharides. Cell surface-bound protein that functions in the copper-accumulation pathway shared by the CUF1-dependent copper transporter CTR1. Involved in maintaining cell wall integrity during copper deficiency. Binds Cu(2+) with an estimated 1:1 stoichiometry and might serve as an extracellular copper ligand. FRE4 and FRE7 metalloreductases probably function together with CTR1 and BIM1 to liberate the Cu(2+) bound to the BIM1 copper-binding site for subsequent import of Cu(+) into the cell by CTR1, via the reduction of BIM1-bound Cu(2+) to Cu(+) to reduce binding affinity for BIM1 but increase affinity for CTR1. Facilitates copper acquisition in the brain of mammalian hosts and acts as a copper-dependent virulence trait in fungal meningitis. While BIM1 plays a critical role in cryptococcal meningitis, at least in part through its role in copper acquisition, it could play additional roles during copper limitation or as a means to invade and colonize host tissues in the brain, by compromising host carbohydrate integrity via its lytic polysaccharide monooxygenase (LPMO) activity, which has still to be determined. The protein is Copper acquisition factor BIM1 of Cryptococcus neoformans var. neoformans serotype D (strain JEC21 / ATCC MYA-565) (Filobasidiella neoformans).